Here is a 235-residue protein sequence, read N- to C-terminus: Serine protease SplA (235 aa).

The first 35 residues, 1–35 (MNKNVMVKGLTALDILTSLGCAENISDQPHSIAKA), serve as a signal peptide directing secretion. Catalysis depends on charge relay system residues H74, D113, and S189.

This sequence belongs to the peptidase S1B family.

Its subcellular location is the secreted. This chain is Serine protease SplA (splA), found in Staphylococcus aureus.